We begin with the raw amino-acid sequence, 301 residues long: Probable 5-dehydro-4-deoxyglucarate dehydratase (301 aa).

Belongs to the DapA family.

It catalyses the reaction 5-dehydro-4-deoxy-D-glucarate + H(+) = 2,5-dioxopentanoate + CO2 + H2O. Its pathway is carbohydrate acid metabolism; D-glucarate degradation; 2,5-dioxopentanoate from D-glucarate: step 2/2. The polypeptide is Probable 5-dehydro-4-deoxyglucarate dehydratase (Cereibacter sphaeroides (strain KD131 / KCTC 12085) (Rhodobacter sphaeroides)).